The sequence spans 72 residues: Holocyclotoxin-1 (72 aa).

An N-terminal signal peptide occupies residues Met1–Phe22. 4 disulfides stabilise this stretch: Cys24/Cys40, Cys32/Cys57, Cys36/Cys60, and Cys42/Cys70.

As to expression, expressed in salivary glands.

Its subcellular location is the secreted. Its function is as follows. Probable neurotoxin. The sequence is that of Holocyclotoxin-1 from Ixodes holocyclus (Australian paralysis tick).